A 624-amino-acid polypeptide reads, in one-letter code: uncharacterized protein (624 aa).

An N-terminal signal peptide occupies residues 1 to 29 (MRFHRQGTAATVGVLLIVLLGFCWKLSES). N-linked (GlcNAc...) asparagine glycans are attached at residues Asn-68, Asn-150, Asn-219, Asn-366, Asn-441, Asn-447, Asn-464, and Asn-528. A disordered region spans residues 141-174 (LERRHGRFGNGTHGDHPKGPPPPPPPDEKDRGSQ).

The protein resides in the secreted. This is an uncharacterized protein from Saccharomyces cerevisiae (strain ATCC 204508 / S288c) (Baker's yeast).